The sequence spans 91 residues: MSEEKKVVLTREYVINLRRTREVSRTKRAKYAVGLIRRFVARHLKVEPKAVKLGQALNEALWARSIEKPPRRVHVVVEKLDDGTVRVELKQ.

Belongs to the eukaryotic ribosomal protein eL31 family.

This is Large ribosomal subunit protein eL31 from Pyrobaculum calidifontis (strain DSM 21063 / JCM 11548 / VA1).